Reading from the N-terminus, the 213-residue chain is Peptidyl-tRNA hydrolase (213 aa).

Tyr15 contacts tRNA. The Proton acceptor role is filled by His20. Residues Phe66, Asn68, and Asn114 each coordinate tRNA. A disordered region spans residues 187-213 (HTTKPPRPKPPRPAAAPVDAPAAPGDQ). The segment covering 201-213 (AAPVDAPAAPGDQ) has biased composition (low complexity).

It belongs to the PTH family. Monomer.

The protein localises to the cytoplasm. The enzyme catalyses an N-acyl-L-alpha-aminoacyl-tRNA + H2O = an N-acyl-L-amino acid + a tRNA + H(+). Hydrolyzes ribosome-free peptidyl-tRNAs (with 1 or more amino acids incorporated), which drop off the ribosome during protein synthesis, or as a result of ribosome stalling. Functionally, catalyzes the release of premature peptidyl moieties from peptidyl-tRNA molecules trapped in stalled 50S ribosomal subunits, and thus maintains levels of free tRNAs and 50S ribosomes. The chain is Peptidyl-tRNA hydrolase from Paracidovorax citrulli (strain AAC00-1) (Acidovorax citrulli).